The chain runs to 214 residues: Large ribosomal subunit protein uL3 (214 aa).

Positions 132 to 145 (SNRASHGNSVTTRA) are enriched in polar residues. The disordered stretch occupies residues 132–155 (SNRASHGNSVTTRAPGSIGQAQDP). Gln153 is subject to N5-methylglutamine.

This sequence belongs to the universal ribosomal protein uL3 family. Part of the 50S ribosomal subunit. Forms a cluster with proteins L14 and L19. Methylated by PrmB.

One of the primary rRNA binding proteins, it binds directly near the 3'-end of the 23S rRNA, where it nucleates assembly of the 50S subunit. This Laribacter hongkongensis (strain HLHK9) protein is Large ribosomal subunit protein uL3.